Consider the following 311-residue polypeptide: Protoheme IX farnesyltransferase (311 aa).

A run of 9 helical transmembrane segments spans residues 32 to 52, 53 to 73, 104 to 124, 125 to 145, 153 to 173, 180 to 200, 224 to 244, 245 to 265, and 285 to 305; these read VMSL…VPIN, PWYG…AGAL, FIFG…FINW, FAAF…TIWL, IVIG…VTTG, FLLF…LSLF, KQIL…CFTG, LGGV…IYFA, and FFFS…ESLV.

Belongs to the UbiA prenyltransferase family. Protoheme IX farnesyltransferase subfamily.

The protein resides in the cell inner membrane. The enzyme catalyses heme b + (2E,6E)-farnesyl diphosphate + H2O = Fe(II)-heme o + diphosphate. It functions in the pathway porphyrin-containing compound metabolism; heme O biosynthesis; heme O from protoheme: step 1/1. Its function is as follows. Converts heme B (protoheme IX) to heme O by substitution of the vinyl group on carbon 2 of heme B porphyrin ring with a hydroxyethyl farnesyl side group. This is Protoheme IX farnesyltransferase from Bartonella tribocorum (strain CIP 105476 / IBS 506).